We begin with the raw amino-acid sequence, 404 residues long: Protein translocase subunit SecD (404 aa).

The next 6 helical transmembrane spans lie at 7-27 (HYIW…FNKV), 239-259 (LIAL…PGIV), 262-282 (IALL…GAAL), 283-303 (TLPG…SNVI), 330-350 (FPAI…LFFL), and 357-377 (GFAV…VFVS).

The protein belongs to the SecD/SecF family. SecD subfamily. Forms a complex with SecF. Part of the essential Sec protein translocation apparatus which comprises SecA, SecYEG and auxiliary proteins SecDF. Other proteins may also be involved.

It is found in the cell inner membrane. Part of the Sec protein translocase complex. Interacts with the SecYEG preprotein conducting channel. SecDF uses the proton motive force (PMF) to complete protein translocation after the ATP-dependent function of SecA. In Leptotrichia buccalis (strain ATCC 14201 / DSM 1135 / JCM 12969 / NCTC 10249 / C-1013-b), this protein is Protein translocase subunit SecD.